The chain runs to 283 residues: Protein/nucleic acid deglycase HchA (283 aa).

3 residues coordinate Zn(2+): histidine 86, glutamate 91, and histidine 123. Catalysis depends on cysteine 185, which acts as the Nucleophile.

This sequence belongs to the peptidase C56 family. HchA subfamily. As to quaternary structure, homodimer.

It is found in the cytoplasm. The catalysed reaction is N(omega)-(1-hydroxy-2-oxopropyl)-L-arginyl-[protein] + H2O = lactate + L-arginyl-[protein] + H(+). It carries out the reaction N(6)-(1-hydroxy-2-oxopropyl)-L-lysyl-[protein] + H2O = lactate + L-lysyl-[protein] + H(+). It catalyses the reaction S-(1-hydroxy-2-oxopropyl)-L-cysteinyl-[protein] + H2O = lactate + L-cysteinyl-[protein] + H(+). The enzyme catalyses N(omega)-(1-hydroxy-2-oxoethyl)-L-arginyl-[protein] + H2O = L-arginyl-[protein] + glycolate + H(+). The catalysed reaction is N(6)-(1-hydroxy-2-oxoethyl)-L-lysyl-[protein] + H2O = glycolate + L-lysyl-[protein] + H(+). It carries out the reaction S-(1-hydroxy-2-oxoethyl)-L-cysteinyl-[protein] + H2O = glycolate + L-cysteinyl-[protein] + H(+). It catalyses the reaction N(2)-(1-hydroxy-2-oxopropyl)-dGTP + H2O = lactate + dGTP + H(+). The enzyme catalyses N(2)-(1-hydroxy-2-oxopropyl)-GTP + H2O = lactate + GTP + H(+). The catalysed reaction is N(2)-(1-hydroxy-2-oxopropyl)-GDP + H2O = lactate + GDP + H(+). It carries out the reaction N(2)-(1-hydroxy-2-oxopropyl)-GMP + H2O = lactate + GMP + H(+). It catalyses the reaction N(2)-(1-hydroxy-2-oxoethyl)-dGTP + H2O = dGTP + glycolate + H(+). The enzyme catalyses N(2)-(1-hydroxy-2-oxoethyl)-GTP + H2O = glycolate + GTP + H(+). The catalysed reaction is N(2)-(1-hydroxy-2-oxoethyl)-GDP + H2O = glycolate + GDP + H(+). It carries out the reaction N(2)-(1-hydroxy-2-oxoethyl)-GMP + H2O = glycolate + GMP + H(+). It catalyses the reaction an N(2)-(1-hydroxy-2-oxopropyl)-guanosine in RNA + H2O = a guanosine in RNA + lactate + H(+). The enzyme catalyses an N(2)-(1-hydroxy-2-oxopropyl)-2'-deoxyguanosine in DNA + H2O = a 2'-deoxyguanosine in DNA + lactate + H(+). The catalysed reaction is an N(2)-(1-hydroxy-2-oxoethyl)-guanosine in RNA + H2O = a guanosine in RNA + glycolate + H(+). It carries out the reaction an N(2)-(1-hydroxy-2-oxoethyl)-2'-deoxyguanosine in DNA + H2O = a 2'-deoxyguanosine in DNA + glycolate + H(+). In terms of biological role, protein and nucleotide deglycase that catalyzes the deglycation of the Maillard adducts formed between amino groups of proteins or nucleotides and reactive carbonyl groups of glyoxals. Thus, functions as a protein deglycase that repairs methylglyoxal- and glyoxal-glycated proteins, and releases repaired proteins and lactate or glycolate, respectively. Deglycates cysteine, arginine and lysine residues in proteins, and thus reactivates these proteins by reversing glycation by glyoxals. Acts on early glycation intermediates (hemithioacetals and aminocarbinols), preventing the formation of Schiff bases and advanced glycation endproducts (AGE). Also functions as a nucleotide deglycase able to repair glycated guanine in the free nucleotide pool (GTP, GDP, GMP, dGTP) and in DNA and RNA. Is thus involved in a major nucleotide repair system named guanine glycation repair (GG repair), dedicated to reversing methylglyoxal and glyoxal damage via nucleotide sanitization and direct nucleic acid repair. Plays an important role in protecting cells from carbonyl stress. This is Protein/nucleic acid deglycase HchA from Escherichia coli O8 (strain IAI1).